A 278-amino-acid chain; its full sequence is Large ribosomal subunit protein uL2 (278 aa).

Disordered stretches follow at residues 28 to 56 (KPVK…GIAG) and 221 to 278 (RGVA…KKKR). Basic residues predominate over residues 269-278 (IRSRHAKKKR).

Belongs to the universal ribosomal protein uL2 family. Part of the 50S ribosomal subunit. Forms a bridge to the 30S subunit in the 70S ribosome.

Functionally, one of the primary rRNA binding proteins. Required for association of the 30S and 50S subunits to form the 70S ribosome, for tRNA binding and peptide bond formation. It has been suggested to have peptidyltransferase activity; this is somewhat controversial. Makes several contacts with the 16S rRNA in the 70S ribosome. This chain is Large ribosomal subunit protein uL2, found in Rhizorhabdus wittichii (strain DSM 6014 / CCUG 31198 / JCM 15750 / NBRC 105917 / EY 4224 / RW1) (Sphingomonas wittichii).